The sequence spans 316 residues: Adenine deaminase (316 aa).

3 residues coordinate Zn(2+): H14, H16, and H194. E197 functions as the Proton donor in the catalytic mechanism. Residue D275 participates in Zn(2+) binding. Substrate is bound at residue D276.

It belongs to the metallo-dependent hydrolases superfamily. Adenosine and AMP deaminases family. Adenine deaminase type 2 subfamily. Requires Zn(2+) as cofactor.

It catalyses the reaction adenine + H2O + H(+) = hypoxanthine + NH4(+). Catalyzes the hydrolytic deamination of adenine to hypoxanthine. Plays an important role in the purine salvage pathway and in nitrogen catabolism. The sequence is that of Adenine deaminase from Stutzerimonas stutzeri (strain A1501) (Pseudomonas stutzeri).